The following is a 507-amino-acid chain: GMP synthase [glutamine-hydrolyzing] (507 aa).

The region spanning 9–202 is the Glutamine amidotransferase type-1 domain; it reads TILIIDFGSQ…VHRIVGVKPG (194 aa). C86 functions as the Nucleophile in the catalytic mechanism. Residues H176 and E178 contribute to the active site. The 193-residue stretch at 203–395 folds into the GMPS ATP-PPase domain; it reads WTMGAYREQA…LGLPDSFIGR (193 aa). 230 to 236 contacts ATP; that stretch reads SGGVDSS.

In terms of assembly, homodimer.

The enzyme catalyses XMP + L-glutamine + ATP + H2O = GMP + L-glutamate + AMP + diphosphate + 2 H(+). Its pathway is purine metabolism; GMP biosynthesis; GMP from XMP (L-Gln route): step 1/1. Catalyzes the synthesis of GMP from XMP. In Brucella melitensis biotype 1 (strain ATCC 23456 / CCUG 17765 / NCTC 10094 / 16M), this protein is GMP synthase [glutamine-hydrolyzing].